We begin with the raw amino-acid sequence, 330 residues long: DNA-directed RNA polymerase subunit alpha (330 aa).

The alpha N-terminal domain (alpha-NTD) stretch occupies residues Met1–Glu231. The tract at residues Met253–Glu330 is alpha C-terminal domain (alpha-CTD).

The protein belongs to the RNA polymerase alpha chain family. As to quaternary structure, homodimer. The RNAP catalytic core consists of 2 alpha, 1 beta, 1 beta' and 1 omega subunit. When a sigma factor is associated with the core the holoenzyme is formed, which can initiate transcription.

It carries out the reaction RNA(n) + a ribonucleoside 5'-triphosphate = RNA(n+1) + diphosphate. In terms of biological role, DNA-dependent RNA polymerase catalyzes the transcription of DNA into RNA using the four ribonucleoside triphosphates as substrates. The sequence is that of DNA-directed RNA polymerase subunit alpha from Flavobacterium psychrophilum (strain ATCC 49511 / DSM 21280 / CIP 103535 / JIP02/86).